Consider the following 1055-residue polypeptide: cAMP and cAMP-inhibited cGMP 3',5'-cyclic phosphodiesterase 10A (1055 aa).

Disordered regions lie at residues 1 to 90 (MASL…RGGG), 151 to 193 (AAAA…GRRR), and 205 to 250 (LPAR…RPQG). Composition is skewed to gly residues over residues 79-90 (GGPGALSARGGG) and 154-168 (AGGG…GGGQ). Over residues 220–231 (PLGQAARRAGSP) the composition is skewed to low complexity. Residues 232–243 (GFPGAGPGGGGQ) show a composition bias toward gly residues. Residue T282 is modified to Phosphothreonine. 2 consecutive GAF domains span residues 367 to 510 (DNQL…SVAI) and 542 to 688 (AIDS…ALAL). Residues 562 to 563 (RC), 606 to 607 (IA), T640, Q659, and H791 contribute to the 3',5'-cyclic AMP site. The region spanning 718-1035 (TSEEWQGLMQ…SQWEKVIRGE (318 aa)) is the PDEase domain. H791 (proton donor) is an active-site residue. H791 contributes to the 3',5'-cyclic GMP binding site. Positions 795, 829, 830, and 940 each coordinate a divalent metal cation. Q992 is a 3',5'-cyclic AMP binding site. Q992 contributes to the 3',5'-cyclic GMP binding site.

Belongs to the cyclic nucleotide phosphodiesterase family. As to quaternary structure, homodimer. It depends on a divalent metal cation as a cofactor. Post-translationally, phosphorylated on Thr-16. Abundant in the putamen and caudate nucleus regions of brain and testis, moderately expressed in the thyroid gland, pituitary gland, thalamus and cerebellum.

Its subcellular location is the cytoplasm. It localises to the cytosol. It catalyses the reaction a nucleoside 3',5'-cyclic phosphate + H2O = a nucleoside 5'-phosphate + H(+). The enzyme catalyses 3',5'-cyclic AMP + H2O = AMP + H(+). It carries out the reaction 3',5'-cyclic GMP + H2O = GMP + H(+). It participates in purine metabolism; 3',5'-cyclic AMP degradation; AMP from 3',5'-cyclic AMP: step 1/1. It functions in the pathway purine metabolism; 3',5'-cyclic GMP degradation; GMP from 3',5'-cyclic GMP: step 1/1. With respect to regulation, inhibited by dipyridamole and moderately by IBMX. cGMP acts as an allosteric activator. Functionally, plays a role in signal transduction by regulating the intracellular concentration of cyclic nucleotides. Can hydrolyze both cAMP and cGMP, but has higher affinity for cAMP and is more efficient with cAMP as substrate. May play a critical role in regulating cAMP and cGMP levels in the striatum, a region of the brain that contributes to the control of movement and cognition. In Homo sapiens (Human), this protein is cAMP and cAMP-inhibited cGMP 3',5'-cyclic phosphodiesterase 10A (PDE10A).